Reading from the N-terminus, the 499-residue chain is Glutamate--tRNA ligase (499 aa).

A 'HIGH' region motif is present at residues 12–22; that stretch reads PSPTGHLHIGN. A 'KMSKS' region motif is present at residues 259–263; that stretch reads KLSKR. An ATP-binding site is contributed by K262.

This sequence belongs to the class-I aminoacyl-tRNA synthetase family. Glutamate--tRNA ligase type 1 subfamily. Monomer.

Its subcellular location is the cytoplasm. The enzyme catalyses tRNA(Glu) + L-glutamate + ATP = L-glutamyl-tRNA(Glu) + AMP + diphosphate. Catalyzes the attachment of glutamate to tRNA(Glu) in a two-step reaction: glutamate is first activated by ATP to form Glu-AMP and then transferred to the acceptor end of tRNA(Glu). The protein is Glutamate--tRNA ligase of Lactobacillus johnsonii (strain CNCM I-12250 / La1 / NCC 533).